Here is a 197-residue protein sequence, read N- to C-terminus: Probable GTP-binding protein EngB (197 aa).

Residues 22–195 form the EngB-type G domain; sequence NLPEIAFVGR…VDYLFDDLVE (174 aa). Residues 30–37, 57–61, 75–78, 142–145, and 174–176 contribute to the GTP site; these read GRSNVGKS, GKTRL, DLPG, TKSD, and FSS. Mg(2+)-binding residues include S37 and T59.

It belongs to the TRAFAC class TrmE-Era-EngA-EngB-Septin-like GTPase superfamily. EngB GTPase family. Requires Mg(2+) as cofactor.

In terms of biological role, necessary for normal cell division and for the maintenance of normal septation. This is Probable GTP-binding protein EngB from Clostridium perfringens (strain SM101 / Type A).